We begin with the raw amino-acid sequence, 295 residues long: Zygote arrest protein 1.S (295 aa).

Disordered stretches follow at residues 80-115 (SVQC…TKTV) and 144-186 (EKGE…APAQ). Positions 144 to 176 (EKGEAVRSEGSEGGRQEGKQGDGEIKEQMKMDK) are enriched in basic and acidic residues. A 3CxxC-type zinc finger spans residues 197–280 (KYGYYHCKDC…RQDLCGRCKG (84 aa)).

This sequence belongs to the ZAR1 family. As to expression, ovary. Also expressed in lung and muscle.

The protein localises to the cytoplasm. Its subcellular location is the cytoplasmic ribonucleoprotein granule. In terms of biological role, mRNA-binding protein required for maternal mRNA storage, translation and degradation during oocyte maturation. Probably promotes formation of some phase-separated membraneless compartment that stores maternal mRNAs in oocytes: acts by undergoing liquid-liquid phase separation upon binding to maternal mRNAs. Binds to the 3'-UTR of maternal mRNAs in immature oocytes, inhibiting their translation. The sequence is that of Zygote arrest protein 1.S (zar1.S) from Xenopus laevis (African clawed frog).